We begin with the raw amino-acid sequence, 60 residues long: Small ribosomal subunit protein bS21 (60 aa).

The segment at 41–60 is disordered; it reads PEEKRKRKAIARRRQRSRRR. Residues 45-60 are compositionally biased toward basic residues; sequence RKRKAIARRRQRSRRR.

It belongs to the bacterial ribosomal protein bS21 family.

This chain is Small ribosomal subunit protein bS21, found in Gloeothece citriformis (strain PCC 7424) (Cyanothece sp. (strain PCC 7424)).